A 183-amino-acid chain; its full sequence is ATP synthase subunit delta, chloroplastic (183 aa).

Belongs to the ATPase delta chain family. In terms of assembly, F-type ATPases have 2 components, F(1) - the catalytic core - and F(0) - the membrane proton channel. F(1) has five subunits: alpha(3), beta(3), gamma(1), delta(1), epsilon(1). CF(0) has four main subunits: a(1), b(1), b'(1) and c(10-14). The alpha and beta chains form an alternating ring which encloses part of the gamma chain. F(1) is attached to F(0) by a central stalk formed by the gamma and epsilon chains, while a peripheral stalk is formed by the delta, b and b' chains.

The protein resides in the plastid. The protein localises to the chloroplast thylakoid membrane. Functionally, f(1)F(0) ATP synthase produces ATP from ADP in the presence of a proton or sodium gradient. F-type ATPases consist of two structural domains, F(1) containing the extramembraneous catalytic core and F(0) containing the membrane proton channel, linked together by a central stalk and a peripheral stalk. During catalysis, ATP synthesis in the catalytic domain of F(1) is coupled via a rotary mechanism of the central stalk subunits to proton translocation. This protein is part of the stalk that links CF(0) to CF(1). It either transmits conformational changes from CF(0) to CF(1) or is implicated in proton conduction. The polypeptide is ATP synthase subunit delta, chloroplastic (Cyanidium caldarium (Red alga)).